A 1371-amino-acid polypeptide reads, in one-letter code: Soluble scavenger receptor cysteine-rich domain-containing protein SSC5D (1371 aa).

The N-terminal stretch at 1–16 is a signal peptide; sequence MRGLACLLAMLVGIQA. The 101-residue stretch at 20 to 120 folds into the SRCR 1 domain; that stretch reads LRLADGPHGC…HEEDAGVVCV (101 aa). 3 disulfides stabilise this stretch: Cys-45–Cys-109, Cys-58–Cys-119, and Cys-89–Cys-99. A compositionally biased stretch (low complexity) spans 143–154; sequence LSGELSPSSEEP. The tract at residues 143–200 is disordered; the sequence is LSGELSPSSEEPPITHAPQPAASSQNGPRKKNPRPPKQTKSTRAPVLTNGAPHQERLR. 2 SRCR domains span residues 199 to 299 and 305 to 405; these read LRLV…LVCT and IRLA…AVCD. 6 disulfide bridges follow: Cys-224-Cys-288, Cys-237-Cys-298, Cys-268-Cys-278, Cys-330-Cys-394, Cys-343-Cys-404, and Cys-374-Cys-384. 2 N-linked (GlcNAc...) asparagine glycosylation sites follow: Asn-377 and Asn-422. Residues 431-466 form a disordered region; sequence TSVGQMPGPAGPWPPSASPTAPPEPGPEAGSPQLRL. Positions 439-456 are enriched in pro residues; it reads PAGPWPPSASPTAPPEPG. Residues 464–565 enclose the SRCR 4 domain; that stretch reads LRLVAGPSRC…HNEDVGVTCT (102 aa). Disulfide bonds link Cys-489–Cys-554, Cys-502–Cys-564, and Cys-534–Cys-544. The disordered stretch occupies residues 592-756; the sequence is WLPGELTTKP…AGVPVPSGPF (165 aa). A compositionally biased stretch (polar residues) spans 599–611; that stretch reads TKPSASLTSSVPQ. Positions 622-633 are enriched in basic residues; the sequence is KSTKKWVTKNAR. Polar residues predominate over residues 653-663; it reads TPTSLHPTART. The segment covering 665–676 has biased composition (basic and acidic residues); it reads ELPKRLTTEAPH. The span at 698 to 740 shows a compositional bias: polar residues; that stretch reads PVVSQSTQGPQEVTSEATTTENPQTSLEPSGENTEGSLESSQD. The segment covering 741–755 has biased composition (low complexity); sequence PATTPTAGVPVPSGP. One can recognise an SRCR 5 domain in the interval 758–858; sequence VRLADGPNRC…HEEDVVLTCT (101 aa). Cystine bridges form between Cys-783–Cys-847, Cys-796–Cys-857, and Cys-827–Cys-837. Disordered regions lie at residues 888–1270 and 1351–1371; these read RPGH…PFGP and STPV…RGDV. Residues 894 to 912 show a composition bias toward polar residues; the sequence is SWATTTNTEVPSPATQNLP. Low complexity-rich tracts occupy residues 936–957, 981–1004, and 1018–1035; these read KGTP…KSPG, PTSA…RQTS, and GTSS…LPSP. Composition is skewed to polar residues over residues 1039-1086 and 1102-1148; these read ALST…TSEL and SSDS…NPQQ. Residues Asn-1044 and Asn-1131 are each glycosylated (N-linked (GlcNAc...) asparagine). Pro residues predominate over residues 1149 to 1163; that stretch reads PRSPHPATSPQPPTN. Residues 1164 to 1189 show a composition bias toward polar residues; sequence THPSSTPATPTESLPSSRKTELSSPT. Over residues 1218 to 1230 the composition is skewed to low complexity; it reads ASESGPSSPSPAS. Residues 1244 to 1261 are compositionally biased toward polar residues; that stretch reads RSQTLHSASDHLTQGPTP.

Interacts with LGALS1 and laminin. In terms of processing, partially N- and O-glycosylated. In terms of tissue distribution, detected throughout the gastrointestinal and genitourinary tracts, in serosal salivary gland, the exocrine part of pancreas and testis, as well as in a few tubular structures in kidney. Not detected in lung and heart (at protein level). Strongly expressed in testis, kidney and pancreas, with lower levels detected in bone marrow, spleen, lung, liver, colon, stomach and skeletal muscle. Very low levels or no expression detected in thymus, esophagus, jejunum, ileum, duodenum, ovary, uterus, heart, trachea, brain, cerebellum and bladder.

It is found in the secreted. The protein resides in the cytoplasm. Binds to extracellular matrix proteins. Binds to pathogen-associated molecular patterns (PAMPs) present on the cell walls of Gram-positive and Gram-negative bacteria and fungi, behaving as a pattern recognition receptor (PRR). Induces bacterial and fungal aggregation and subsequent inhibition of PAMP-induced cytokine release. Does not possess intrinsic bactericidal activity. May play a role in the innate defense and homeostasis of certain epithelial surfaces. The protein is Soluble scavenger receptor cysteine-rich domain-containing protein SSC5D (Ssc5d) of Mus musculus (Mouse).